The sequence spans 380 residues: MSHKTKPSTQERKAGKPSAPKRKVISKSPNSKLKTIVKGQKNTAVKAQTSKPLHPRNVHNKGYDFPALIAAFAALKSFVKPNPYGNLSIDFADPQAVKMLNAALLKLHYDVEHWDIPAGFLCPPIPGRADYIHYVADLLAVKKSSKKRVPKGPRVKVLDIGTGANVIYPLLGIQSYGWSFVGSDVDPLSIANAQQVFASNPAIAARFNSRLQTNAKHVFHGVIEPNERFDITLCNPPFHASLAEASEGTARKLKNLAANRAKSSEAKPLRSTKPVVTKTETPLNFGGQKAELWCEGGELQFLQTMISESHEFASQCLWFTTLVSKKENLKPAKALLAKVKAEEVKEMEMHQGNKITRVLAWTFLKPEQRELWAQYRDVEN.

The tract at residues 1 to 32 (MSHKTKPSTQERKAGKPSAPKRKVISKSPNSK) is disordered.

Belongs to the methyltransferase superfamily. METTL16/RlmF family.

It is found in the cytoplasm. The catalysed reaction is adenosine(1618) in 23S rRNA + S-adenosyl-L-methionine = N(6)-methyladenosine(1618) in 23S rRNA + S-adenosyl-L-homocysteine + H(+). Its function is as follows. Specifically methylates the adenine in position 1618 of 23S rRNA. The sequence is that of Ribosomal RNA large subunit methyltransferase F from Shewanella halifaxensis (strain HAW-EB4).